Consider the following 587-residue polypeptide: Aspartate--tRNA ligase (587 aa).

Glu-173 contributes to the L-aspartate binding site. The tract at residues 197-200 (QTLK) is aspartate. Position 219 (Arg-219) interacts with L-aspartate. ATP contacts are provided by residues 219–221 (RDE) and Gln-228. Position 446 (His-446) interacts with L-aspartate. Residue Glu-480 coordinates ATP. Residue Arg-487 participates in L-aspartate binding. 532 to 535 (GLDR) lines the ATP pocket.

This sequence belongs to the class-II aminoacyl-tRNA synthetase family. Type 1 subfamily. In terms of assembly, homodimer.

It is found in the cytoplasm. It catalyses the reaction tRNA(Asp) + L-aspartate + ATP = L-aspartyl-tRNA(Asp) + AMP + diphosphate. Its function is as follows. Catalyzes the attachment of L-aspartate to tRNA(Asp) in a two-step reaction: L-aspartate is first activated by ATP to form Asp-AMP and then transferred to the acceptor end of tRNA(Asp). This Bacteroides thetaiotaomicron (strain ATCC 29148 / DSM 2079 / JCM 5827 / CCUG 10774 / NCTC 10582 / VPI-5482 / E50) protein is Aspartate--tRNA ligase.